Reading from the N-terminus, the 530-residue chain is Arginine--tRNA ligase (530 aa).

Positions 113–123 (ANPTGPLHIGH) match the 'HIGH' region motif.

The protein belongs to the class-I aminoacyl-tRNA synthetase family. As to quaternary structure, monomer.

The protein localises to the cytoplasm. It catalyses the reaction tRNA(Arg) + L-arginine + ATP = L-arginyl-tRNA(Arg) + AMP + diphosphate. In Campylobacter jejuni subsp. jejuni serotype O:6 (strain 81116 / NCTC 11828), this protein is Arginine--tRNA ligase.